The chain runs to 616 residues: Probable Xaa-Pro aminopeptidase P (616 aa).

Mn(2+) contacts are provided by Asp413, Asp424, Glu522, and Glu536.

Belongs to the peptidase M24B family. Mn(2+) serves as cofactor.

The enzyme catalyses Release of any N-terminal amino acid, including proline, that is linked to proline, even from a dipeptide or tripeptide.. Its function is as follows. Catalyzes the removal of a penultimate prolyl residue from the N-termini of peptides. This is Probable Xaa-Pro aminopeptidase P (AMPP) from Paracoccidioides brasiliensis (strain Pb03).